The primary structure comprises 1022 residues: Antigenic heat-stable 120 kDa protein (1022 aa).

The segment at 1–33 (MSKNGNQDISEFDPLNREFTEAEKQQQMQQEQE) is disordered. Positions 14–24 (PLNREFTEAEK) are enriched in basic and acidic residues.

It localises to the cytoplasm. This Rickettsia prowazekii (strain Madrid E) protein is Antigenic heat-stable 120 kDa protein (sca4).